A 353-amino-acid polypeptide reads, in one-letter code: Guanine nucleotide-binding protein alpha-1 subunit (353 aa).

The interval 1-26 (MGCGMSTEEKEGKARNEEIENQLKRD) is disordered. Gly-2 carries the N-myristoyl glycine lipid modification. Cys-3 carries S-palmitoyl cysteine lipidation. Basic and acidic residues predominate over residues 7–26 (TEEKEGKARNEEIENQLKRD). In terms of domain architecture, G-alpha spans 32-353 (NEIKMLLLGA…QENLRLCGLI (322 aa)). A G1 motif region spans residues 35-48 (KMLLLGAGESGKST). GTP contacts are provided by Glu-43, Ser-44, Gly-45, Lys-46, Ser-47, Thr-48, Asp-150, Leu-175, Thr-181, Gly-203, Asn-269, Lys-270, Asp-272, and Ala-325. Ser-47 contacts Mg(2+). Residues 173-181 (DVLRSRVKT) form a G2 motif region. Thr-181 contributes to the Mg(2+) binding site. Positions 196–205 (YRMFDVGGQR) are G3 motif. A G4 motif region spans residues 265–272 (ILFLNKID). The segment at 323 to 328 (TCATDT) is G5 motif.

Belongs to the G-alpha family. G(q) subfamily. G proteins are composed of 3 units; alpha, beta and gamma. The alpha chain contains the guanine nucleotide binding site. The cofactor is Mg(2+).

In terms of biological role, guanine nucleotide-binding proteins (G proteins) are involved as modulators or transducers in various transmembrane signaling systems. This is Guanine nucleotide-binding protein alpha-1 subunit (gna-1) from Neurospora crassa (strain ATCC 24698 / 74-OR23-1A / CBS 708.71 / DSM 1257 / FGSC 987).